The chain runs to 443 residues: BBSome complex member BBS5 homolog (443 aa).

This sequence belongs to the BBS5 family.

The protein localises to the cytoplasm. The protein resides in the cytoskeleton. It localises to the flagellum axoneme. The protein is BBSome complex member BBS5 homolog of Giardia intestinalis (strain ATCC 50803 / WB clone C6) (Giardia lamblia).